The sequence spans 246 residues: Phycobilisome rod-core linker polypeptide CpcG2 (246 aa).

The PBS-linker domain occupies 11-189 (SSQNQRVAGY…YWRDKLENSR (179 aa)). A disordered region spans residues 224–246 (DTTRRDRPTVPASINPTASFPLR). Positions 235-246 (ASINPTASFPLR) are enriched in polar residues.

The protein belongs to the phycobilisome linker protein family. As to quaternary structure, the phycobilisome is a hemidiscoidal structure that is composed of two distinct substructures: a core complex and a number of rods radiating from the core.

It is found in the cellular thylakoid membrane. Its function is as follows. Rod-core linker protein required for attachment of phycocyanin to allophycocyanin in cores of phycobilisomes. Linker polypeptides determine the state of aggregation and the location of the disk-shaped phycobiliprotein units within the phycobilisome and modulate their spectroscopic properties in order to mediate a directed and optimal energy transfer. The chain is Phycobilisome rod-core linker polypeptide CpcG2 (cpcG2) from Thermosynechococcus vestitus (strain NIES-2133 / IAM M-273 / BP-1).